The chain runs to 597 residues: Kelch-like protein 21 (597 aa).

The region spanning 35-103 (LDVTLEAAGG…SYTGRVAVSG (69 aa)) is the BTB domain. The BACK domain maps to 138–239 (CLDMQDFAEA…RRFYLLAHVE (102 aa)). 6 Kelch repeats span residues 287-335 (ILVL…ALGN), 336-382 (DIYV…VLNG), 384-422 (LYVVAADSTERYDHATDSWEALQPMTYPMDNCSTTACRG), 423-470 (RLYA…TLNG), 472-512 (MYFV…ALGG), and 513-560 (KLYV…SIFR). Residues 570–597 (GRGFELNSGSSDVDAGHHRLPQNPEELQ) are disordered.

As to quaternary structure, component of the BCR(KLHL21) E3 ubiquitin ligase complex, at least composed of CUL3, KLHL21 and RBX1.

The protein localises to the cytoplasm. It localises to the cytoskeleton. Its subcellular location is the spindle. It functions in the pathway protein modification; protein ubiquitination. Functionally, substrate-specific adapter of BCR (BTB-CUL3-RBX1) E3 ubiquitin-protein ligase complex required for efficient chromosome alignment and cytokinesis. The BCR(KLHL21) E3 ubiquitin ligase complex regulates localization of the chromosomal passenger complex (CPC) from chromosomes to the spindle midzone in anaphase and mediates the ubiquitination of AURKB. Ubiquitination of AURKB by BCR(KLHL21) E3 ubiquitin ligase complex may not lead to its degradation by the proteasome. This is Kelch-like protein 21 (Klhl21) from Rattus norvegicus (Rat).